The chain runs to 208 residues: Crossover junction endodeoxyribonuclease RuvC (208 aa).

Residues Asp-9, Glu-70, and Asp-143 contribute to the active site. Mg(2+) is bound by residues Asp-9, Glu-70, and Asp-143.

Belongs to the RuvC family. In terms of assembly, homodimer which binds Holliday junction (HJ) DNA. The HJ becomes 2-fold symmetrical on binding to RuvC with unstacked arms; it has a different conformation from HJ DNA in complex with RuvA. In the full resolvosome a probable DNA-RuvA(4)-RuvB(12)-RuvC(2) complex forms which resolves the HJ. Mg(2+) is required as a cofactor.

It localises to the cytoplasm. The catalysed reaction is Endonucleolytic cleavage at a junction such as a reciprocal single-stranded crossover between two homologous DNA duplexes (Holliday junction).. Its function is as follows. The RuvA-RuvB-RuvC complex processes Holliday junction (HJ) DNA during genetic recombination and DNA repair. Endonuclease that resolves HJ intermediates. Cleaves cruciform DNA by making single-stranded nicks across the HJ at symmetrical positions within the homologous arms, yielding a 5'-phosphate and a 3'-hydroxyl group; requires a central core of homology in the junction. The consensus cleavage sequence is 5'-(A/T)TT(C/G)-3'. Cleavage occurs on the 3'-side of the TT dinucleotide at the point of strand exchange. HJ branch migration catalyzed by RuvA-RuvB allows RuvC to scan DNA until it finds its consensus sequence, where it cleaves and resolves the cruciform DNA. This is Crossover junction endodeoxyribonuclease RuvC from Leifsonia xyli subsp. xyli (strain CTCB07).